A 342-amino-acid chain; its full sequence is Alpha-(1,3)-fucosyltransferase 7 (342 aa).

At 1-14 (MNNAGHGPTRRLRG) the chain is on the cytoplasmic side. A helical; Signal-anchor for type II membrane protein transmembrane segment spans residues 15–36 (LGVLAGVALLAALWLLWLLGSA). The Lumenal portion of the chain corresponds to 37–342 (PRGTPAPQPT…YEDLEGWFQA (306 aa)). Cys68 and Cys76 are joined by a disulfide. The N-linked (GlcNAc...) asparagine glycan is linked to Asn81. A disulfide bridge connects residues Cys211 and Cys214. N-linked (GlcNAc...) asparagine glycosylation is present at Asn291. A disulfide bridge links Cys318 with Cys321.

Belongs to the glycosyltransferase 10 family. In terms of processing, N-glycosylated. Leukocytic/myeloid lineage cells.

The protein localises to the golgi apparatus. It localises to the golgi stack membrane. It catalyses the reaction an N-acetyl-alpha-neuraminyl-(2-&gt;3)-beta-D-galactosyl-(1-&gt;4)-N-acetyl-beta-D-glucosaminyl derivative + GDP-beta-L-fucose = an alpha-Neu5Ac-(2-&gt;3)-beta-D-Gal-(1-&gt;4)-[alpha-L-Fuc-(1-&gt;3)]-beta-D-GlcNAc derivative + GDP + H(+). The enzyme catalyses a neolactoside IV(3)-alpha-NeuAc-nLc4Cer + GDP-beta-L-fucose = a neolactoside IV(3)-alpha-NeuNAc,III(3)-alpha-Fuc-nLc4Cer + GDP + H(+). The catalysed reaction is a neolactoside VI(3)-alpha-NeuNAc-nLc6Cer + GDP-beta-L-fucose = a neolactoside VI(3)-alpha-NeuAc,V(3)-alphaFuc-nLc6Cer + GDP + H(+). It carries out the reaction an alpha-Neu5Ac-(2-&gt;3)-beta-D-Gal-(1-&gt;4)-beta-D-GlcNAc-(1-&gt;3)-beta-D-Gal-(1-&gt;4)-[alpha-L-Fuc-(1-&gt;3)]-beta-D-GlcNAc derivative + GDP-beta-L-fucose = an alpha-Neu5Ac-(2-&gt;3)-beta-D-Gal-(1-&gt;4)-[alpha-L-Fuc-(1-&gt;3)]-beta-D-GlcNAc-(1-&gt;3)-beta-D-Gal-(1-&gt;4)-[alpha-L-Fuc-(1-&gt;3)]-beta-D-GlcNAc derivative + GDP + H(+). It catalyses the reaction an alpha-Neu5Ac-(2-&gt;3)-beta-D-Gal-(1-&gt;4)-beta-D-GlcNAc6S derivative + GDP-beta-L-fucose = an alpha-Neu5Ac-(2-&gt;3)-beta-D-Gal-(1-&gt;4)-[alpha-L-Fuc-(1-&gt;3)]-beta-D-GlcNAc6S derivative + GDP + H(+). The enzyme catalyses alpha-Neu5Ac-(2-&gt;3)-beta-D-Gal-(1-&gt;4)-beta-D-GlcNAc-(1-&gt;3)-beta-D-Gal-(1-&gt;4)-D-Glc + GDP-beta-L-fucose = alpha-Neu5Ac-(2-&gt;3)-beta-D-Gal-(1-&gt;4)-[alpha-L-Fuc-(1-&gt;3)]-beta-D-GlcNAc-(1-&gt;3)-beta-D-Gal-(1-&gt;4)-D-Glc + GDP + H(+). The catalysed reaction is alpha-Neu5Ac-(2-&gt;3)-beta-D-Gal-(1-&gt;4)-beta-D-GlcNAc-(1-&gt;3)-beta-D-Gal-(1-&gt;4)-[alpha-L-Fuc-(1-&gt;3)]-beta-D-GlcNAc-(1-&gt;3)-beta-D-Gal-(1-&gt;4)-beta-D-GlcNAc + GDP-beta-L-fucose = alpha-Neu5Ac-(2-&gt;3)-beta-D-Gal-(1-&gt;4)-[alpha-L-Fuc-(1-&gt;3)]-beta-D-GlcNAc-(1-&gt;3)-beta-D-Gal-(1-&gt;4)-[alpha-L-Fuc-(1-&gt;3)]-beta-D-GlcNAc-(1-&gt;3)-beta-D-Gal-(1-&gt;4)-beta-D-GlcNAc + GDP + H(+). It carries out the reaction alpha-Neu5Ac-(2-&gt;3)-beta-D-Gal-(1-&gt;4)-beta-D-GlcNAc-(1-&gt;3)-beta-D-Gal-(1-&gt;4)-beta-D-GlcNAc-(1-&gt;3)-beta-D-Gal-(1-&gt;4)-beta-D-GlcNAc + GDP-beta-L-fucose = alpha-Neu5Ac-(2-&gt;3)-beta-D-Gal-(1-&gt;4)-[alpha-L-Fuc-(1-&gt;3)]-beta-D-GlcNAc-(1-&gt;3)-beta-D-Gal-(1-&gt;4)-beta-D-GlcNAc-(1-&gt;3)-beta-D-Gal-(1-&gt;4)-beta-D-GlcNAc + GDP + H(+). It participates in protein modification; protein glycosylation. Inhibited by NaCl. Inhibited by GDP in a concentration dependent manner, with an IC(50) value of 93 uM. Also inhibited by GMP and GTP. Inhibited by N-ethylmaleimide. Activated by poly(ethylene glycol) by enhancing the thermal stability of FUT7. Activated by Mn2+, Ca2+, and Mg2+. Both panosialin A and B inhibit activity with IC(50) values of 4.8 and 5.3 ug/ml, respectively. Inhibited by gallic acid (GA) and (-)-epigallocatechin gallate (EGCG) in a time-dependent and irreversible manner with IC(50) values of 60 and 700 nM, respectively. In terms of biological role, catalyzes the transfer of L-fucose, from a guanosine diphosphate-beta-L-fucose, to the N-acetyl glucosamine (GlcNAc) of a distal alpha2,3 sialylated lactosamine unit of a glycoprotein or a glycolipid-linked sialopolylactosamines chain through an alpha-1,3 glycosidic linkage and participates in the final fucosylation step in the biosynthesis of the sialyl Lewis X (sLe(x)), a carbohydrate involved in cell and matrix adhesion during leukocyte trafficking and fertilization. In vitro, also synthesizes sialyl-dimeric-Lex structures, from VIM-2 structures and both di-fucosylated and trifucosylated structures from mono-fucosylated precursors. However does not catalyze alpha 1-3 fucosylation when an internal alpha 1-3 fucosylation is present in polylactosamine chain and the fucosylation rate of the internal GlcNAc residues is reduced once fucose has been added to the distal GlcNAc. Also catalyzes the transfer of a fucose from GDP-beta-fucose to the 6-sulfated a(2,3)sialylated substrate to produce 6-sulfo sLex mediating significant L-selectin-dependent cell adhesion. Through sialyl-Lewis(x) biosynthesis, can control SELE- and SELP-mediated cell adhesion with leukocytes and allows leukocytes tethering and rolling along the endothelial tissue thereby enabling the leukocytes to accumulate at a site of inflammation. May enhance embryo implantation through sialyl Lewis X (sLeX)-mediated adhesion of embryo cells to endometrium. May affect insulin signaling by up-regulating the phosphorylation and expression of some signaling molecules involved in the insulin-signaling pathway through SLe(x) which is present on the glycans of the INSRR alpha subunit. The sequence is that of Alpha-(1,3)-fucosyltransferase 7 from Homo sapiens (Human).